A 425-amino-acid chain; its full sequence is Serine--tRNA ligase (425 aa).

Residues 41 to 70 form a disordered region; sequence TERSQLQARSNQVGKQVGEKIKSGSDPKGT. Over residues 44–54 the composition is skewed to polar residues; sequence SQLQARSNQVG. Positions 57–70 are enriched in basic and acidic residues; it reads VGEKIKSGSDPKGT. Position 234–236 (234–236) interacts with L-serine; that stretch reads TSE. 265 to 267 provides a ligand contact to ATP; sequence RRE. Glutamate 288 is an L-serine binding site. 352-355 contributes to the ATP binding site; that stretch reads EISS. Residue serine 388 participates in L-serine binding.

This sequence belongs to the class-II aminoacyl-tRNA synthetase family. Type-1 seryl-tRNA synthetase subfamily. In terms of assembly, homodimer. The tRNA molecule binds across the dimer.

The protein localises to the cytoplasm. The catalysed reaction is tRNA(Ser) + L-serine + ATP = L-seryl-tRNA(Ser) + AMP + diphosphate + H(+). It carries out the reaction tRNA(Sec) + L-serine + ATP = L-seryl-tRNA(Sec) + AMP + diphosphate + H(+). The protein operates within aminoacyl-tRNA biosynthesis; selenocysteinyl-tRNA(Sec) biosynthesis; L-seryl-tRNA(Sec) from L-serine and tRNA(Sec): step 1/1. Its function is as follows. Catalyzes the attachment of serine to tRNA(Ser). Is also able to aminoacylate tRNA(Sec) with serine, to form the misacylated tRNA L-seryl-tRNA(Sec), which will be further converted into selenocysteinyl-tRNA(Sec). This Trichodesmium erythraeum (strain IMS101) protein is Serine--tRNA ligase.